The primary structure comprises 556 residues: Formate--tetrahydrofolate ligase (556 aa).

65–72 (TPAGEGKS) contacts ATP.

This sequence belongs to the formate--tetrahydrofolate ligase family.

The enzyme catalyses (6S)-5,6,7,8-tetrahydrofolate + formate + ATP = (6R)-10-formyltetrahydrofolate + ADP + phosphate. The protein operates within one-carbon metabolism; tetrahydrofolate interconversion. The sequence is that of Formate--tetrahydrofolate ligase from Clostridium acetobutylicum (strain ATCC 824 / DSM 792 / JCM 1419 / IAM 19013 / LMG 5710 / NBRC 13948 / NRRL B-527 / VKM B-1787 / 2291 / W).